We begin with the raw amino-acid sequence, 444 residues long: Tryptophan 5-hydroxylase 1 (444 aa).

An ACT domain is found at 19 to 94 (TLIFSLKNEV…NVLSVTPPDN (76 aa)). Serine 58 is modified (phosphoserine; by PKA). Residues tyrosine 235, arginine 257, and threonine 265 each contribute to the L-tryptophan site. Residues histidine 272, histidine 277, and glutamate 317 each coordinate Fe cation. Serine 336 and isoleucine 366 together coordinate L-tryptophan.

Belongs to the biopterin-dependent aromatic amino acid hydroxylase family. Homotetramer. Interacts with DNAJC12. Requires Fe(2+) as cofactor. Post-translationally, ubiquitinated, leading to its degradation by the proteasome. Ubiquitinated is triggered by phosphorylation. In terms of processing, phosphorylated; triggering degradation by the proteasome.

The catalysed reaction is (6R)-L-erythro-5,6,7,8-tetrahydrobiopterin + L-tryptophan + O2 = 5-hydroxy-L-tryptophan + (4aS,6R)-4a-hydroxy-L-erythro-5,6,7,8-tetrahydrobiopterin. Its pathway is aromatic compound metabolism; serotonin biosynthesis; serotonin from L-tryptophan: step 1/2. In terms of biological role, oxidizes L-tryptophan to 5-hydroxy-l-tryptophan in the rate-determining step of serotonin biosynthesis. The chain is Tryptophan 5-hydroxylase 1 (TPH1) from Oryctolagus cuniculus (Rabbit).